The chain runs to 36 residues: Protein P4 (36 aa).

A helical transmembrane segment spans residues 13–33; it reads GLQLSLLICACLLAVLIVSFC.

The protein resides in the host membrane. The sequence is that of Protein P4 from Vitis vinifera (Grape).